Consider the following 333-residue polypeptide: Adenosine deaminase (333 aa).

Zn(2+) contacts are provided by His-12 and His-14. Substrate contacts are provided by His-14, Asp-16, and Gly-170. His-197 is a Zn(2+) binding site. Glu-200 (proton donor) is an active-site residue. Asp-278 contributes to the Zn(2+) binding site. Asp-279 is a substrate binding site.

The protein belongs to the metallo-dependent hydrolases superfamily. Adenosine and AMP deaminases family. Adenosine deaminase subfamily. The cofactor is Zn(2+).

It catalyses the reaction adenosine + H2O + H(+) = inosine + NH4(+). The catalysed reaction is 2'-deoxyadenosine + H2O + H(+) = 2'-deoxyinosine + NH4(+). In terms of biological role, catalyzes the hydrolytic deamination of adenosine and 2-deoxyadenosine. This Klebsiella pneumoniae (strain 342) protein is Adenosine deaminase.